The sequence spans 258 residues: UPF0246 protein Sfri_2896 (258 aa).

The protein belongs to the UPF0246 family.

The chain is UPF0246 protein Sfri_2896 from Shewanella frigidimarina (strain NCIMB 400).